Reading from the N-terminus, the 350-residue chain is Biotin synthase (350 aa).

A Radical SAM core domain is found at 41–268 (NEVQISRLLS…KSRVRLSAGR (228 aa)). [4Fe-4S] cluster is bound by residues Cys-56, Cys-60, and Cys-63. [2Fe-2S] cluster is bound by residues Cys-100, Cys-131, Cys-191, and Arg-263.

It belongs to the radical SAM superfamily. Biotin synthase family. As to quaternary structure, homodimer. The cofactor is [4Fe-4S] cluster. [2Fe-2S] cluster serves as cofactor.

It catalyses the reaction (4R,5S)-dethiobiotin + (sulfur carrier)-SH + 2 reduced [2Fe-2S]-[ferredoxin] + 2 S-adenosyl-L-methionine = (sulfur carrier)-H + biotin + 2 5'-deoxyadenosine + 2 L-methionine + 2 oxidized [2Fe-2S]-[ferredoxin]. Its pathway is cofactor biosynthesis; biotin biosynthesis; biotin from 7,8-diaminononanoate: step 2/2. Functionally, catalyzes the conversion of dethiobiotin (DTB) to biotin by the insertion of a sulfur atom into dethiobiotin via a radical-based mechanism. This is Biotin synthase from Shewanella halifaxensis (strain HAW-EB4).